A 546-amino-acid chain; its full sequence is Protein FAM124A (546 aa).

Disordered stretches follow at residues 1–37 (MDPKAGGGGEEDDCVDSGAETGGSDYSHLSSTSSELS), 285–361 (KFPK…QRSK), and 488–546 (SSSS…EFYI). Over residues 24-36 (SDYSHLSSTSSEL) the composition is skewed to low complexity. Basic residues predominate over residues 285–302 (KFPKPGRVHHSSEKKRHS). Composition is skewed to polar residues over residues 304 to 324 (PLPSTAVPSHTPGSSQQSPLN) and 347 to 361 (ANSTPNPPWSFQRSK). The segment covering 488-511 (SSSSATARAAPPAPSTSTLTDSSP) has biased composition (low complexity).

It belongs to the FAM124 family.

In Pongo abelii (Sumatran orangutan), this protein is Protein FAM124A (FAM124A).